The primary structure comprises 334 residues: D-aspartate oxidase 2 (334 aa).

FAD contacts are provided by D38, K39, S46, G310, and T315.

This sequence belongs to the DAMOX/DASOX family. FAD serves as cofactor. In terms of tissue distribution, expressed in the intestinal cells, pharyngeal muscles, and body wall muscles in adult hermaphrodites.

The protein resides in the cytoplasm. The enzyme catalyses D-aspartate + O2 + H2O = oxaloacetate + H2O2 + NH4(+). It carries out the reaction D-glutamate + O2 + H2O = H2O2 + 2-oxoglutarate + NH4(+). Its activity is regulated as follows. Inhibited by thiolactomycin. Its function is as follows. Selectively catalyzes the oxidative deamination of acidic amino acids. May play a role in the egg-laying events and early development of the worm, in addition to quality control of the germ cells. The polypeptide is D-aspartate oxidase 2 (ddo-2) (Caenorhabditis elegans).